We begin with the raw amino-acid sequence, 93 residues long: Small ribosomal subunit protein mS33 (93 aa).

It belongs to the mitochondrion-specific ribosomal protein mS33 family. Component of the mitochondrial small ribosomal subunit (mt-SSU). Mature yeast 74S mitochondrial ribosomes consist of a small (37S) and a large (54S) subunit. The 37S small subunit contains a 15S ribosomal RNA (15S mt-rRNA) and at least 32 different proteins. The 54S large subunit contains a 21S rRNA (21S mt-rRNA) and at least 45 different proteins.

It localises to the mitochondrion. Component of the mitochondrial ribosome (mitoribosome), a dedicated translation machinery responsible for the synthesis of mitochondrial genome-encoded proteins, including at least some of the essential transmembrane subunits of the mitochondrial respiratory chain. The mitoribosomes are attached to the mitochondrial inner membrane and translation products are cotranslationally integrated into the membrane. The sequence is that of Small ribosomal subunit protein mS33 (rsm27) from Schizosaccharomyces pombe (strain 972 / ATCC 24843) (Fission yeast).